Reading from the N-terminus, the 558-residue chain is Probable rhamnogalacturonase B (558 aa).

The signal sequence occupies residues 1–21 (MLLDKLSVLSFLGLAPIFAAA). Cysteine 42 and cysteine 68 are disulfide-bonded. N-linked (GlcNAc...) asparagine glycosylation is present at asparagine 145. Aspartate 219 serves as the catalytic Proton donor. Cysteine 221 and cysteine 238 are oxidised to a cystine. 2 N-linked (GlcNAc...) asparagine glycosylation sites follow: asparagine 239 and asparagine 254. Histidine 294 is an active-site residue. N-linked (GlcNAc...) asparagine glycosylation occurs at asparagine 321. 2 disulfide bridges follow: cysteine 344–cysteine 350 and cysteine 372–cysteine 381. Residues 503–526 (VGAQEGSTTSAPSFAAPSGAGNSP) are compositionally biased toward low complexity. The interval 503-558 (VGAQEGSTTSAPSFAAPSGAGNSPQGPTGASGFGEKGQQGEQGEQGEQGEQGVCYV) is disordered.

Belongs to the glycosyl hydrolase 28 family.

The protein resides in the secreted. It catalyses the reaction Endohydrolysis of alpha-D-GalA-(1-&gt;2)-alpha-L-Rha glycosidic bond in the rhamnogalacturonan I backbone with initial inversion of anomeric configuration releasing oligosaccharides with beta-D-GalA at the reducing end.. Pectinolytic enzymes consist of four classes of enzymes: pectine lyase, polygalacturonase, pectin methylesterase and rhamnogalacturonase. Hydrolyzes alpha-D-galacturonopyranosyl-(1,2)-alpha-L-rhamnopyranosyl linkages in the backbone of the hairy regions of pectins. This Aspergillus niger (strain ATCC MYA-4892 / CBS 513.88 / FGSC A1513) protein is Probable rhamnogalacturonase B (rhgB).